The sequence spans 428 residues: Divalent metal cation transporter MntH (428 aa).

A run of 11 helical transmembrane segments spans residues 33–53 (WYLLGPAFVAAIAYVDPGNVA), 60–80 (AQFGYLLLWVIVAANVMAALV), 114–134 (QAEIVAMATDVAEVIGGAIAL), 136–156 (IMFNLPLPIGGIITGVVSLLL), 171–191 (VITALLLVIAIGFTASFFVVT), 210–230 (SVLLAAAIMGATVMPHAVYLH), 258–278 (VGLAMLIAGGVNAAMLLVAAL), 299–319 (TLGATIAVLFAVGLLASGLAS), 334–356 (LLHWSVPMLVRRLITLGPALAIL), 365–385 (TLVLSQVVLSFGIPFAVLPLV), and 406–426 (VGWVVAVMVSLLNVMLIYLTV).

It belongs to the NRAMP family.

Its subcellular location is the cell membrane. H(+)-stimulated, divalent metal cation uptake system. Transports zinc and iron. Can also interact with manganese and copper. In Mycobacterium tuberculosis (strain CDC 1551 / Oshkosh), this protein is Divalent metal cation transporter MntH.